Here is a 158-residue protein sequence, read N- to C-terminus: 2-C-methyl-D-erythritol 2,4-cyclodiphosphate synthase (158 aa).

A divalent metal cation contacts are provided by D9 and H11. Residues 9–11 (DVH) and 35–36 (HS) contribute to the 4-CDP-2-C-methyl-D-erythritol 2-phosphate site. H43 provides a ligand contact to a divalent metal cation. 4-CDP-2-C-methyl-D-erythritol 2-phosphate-binding positions include 57-59 (DIG), 62-66 (FPDTD), 101-107 (AQAPKMA), 133-136 (TTTE), F140, and R143.

It belongs to the IspF family. Homotrimer. The cofactor is a divalent metal cation.

The enzyme catalyses 4-CDP-2-C-methyl-D-erythritol 2-phosphate = 2-C-methyl-D-erythritol 2,4-cyclic diphosphate + CMP. Its pathway is isoprenoid biosynthesis; isopentenyl diphosphate biosynthesis via DXP pathway; isopentenyl diphosphate from 1-deoxy-D-xylulose 5-phosphate: step 4/6. Involved in the biosynthesis of isopentenyl diphosphate (IPP) and dimethylallyl diphosphate (DMAPP), two major building blocks of isoprenoid compounds. Catalyzes the conversion of 4-diphosphocytidyl-2-C-methyl-D-erythritol 2-phosphate (CDP-ME2P) to 2-C-methyl-D-erythritol 2,4-cyclodiphosphate (ME-CPP) with a corresponding release of cytidine 5-monophosphate (CMP). This Vibrio campbellii (strain ATCC BAA-1116) protein is 2-C-methyl-D-erythritol 2,4-cyclodiphosphate synthase.